We begin with the raw amino-acid sequence, 634 residues long: Threonine--tRNA ligase (634 aa).

A TGS domain is found at 1 to 61 (MINIRFPDGS…NSNCELRLIT (61 aa)). A catalytic region spans residues 241 to 532 (DHRKIGKVLD…LIEHYAGNLP (292 aa)). 3 residues coordinate Zn(2+): Cys332, His383, and His509.

This sequence belongs to the class-II aminoacyl-tRNA synthetase family. Homodimer. It depends on Zn(2+) as a cofactor.

It localises to the cytoplasm. The enzyme catalyses tRNA(Thr) + L-threonine + ATP = L-threonyl-tRNA(Thr) + AMP + diphosphate + H(+). Its function is as follows. Catalyzes the attachment of threonine to tRNA(Thr) in a two-step reaction: L-threonine is first activated by ATP to form Thr-AMP and then transferred to the acceptor end of tRNA(Thr). Also edits incorrectly charged L-seryl-tRNA(Thr). The chain is Threonine--tRNA ligase from Francisella tularensis subsp. novicida (strain U112).